A 155-amino-acid chain; its full sequence is NADPH-dependent 7-cyano-7-deazaguanine reductase (155 aa).

The active-site Thioimide intermediate is Cys53. Asp60 serves as the catalytic Proton donor. Substrate-binding positions include 75-77 and 94-95; these read VES and HE.

This sequence belongs to the GTP cyclohydrolase I family. QueF type 1 subfamily.

Its subcellular location is the cytoplasm. The catalysed reaction is 7-aminomethyl-7-carbaguanine + 2 NADP(+) = 7-cyano-7-deazaguanine + 2 NADPH + 3 H(+). It functions in the pathway tRNA modification; tRNA-queuosine biosynthesis. Functionally, catalyzes the NADPH-dependent reduction of 7-cyano-7-deazaguanine (preQ0) to 7-aminomethyl-7-deazaguanine (preQ1). The chain is NADPH-dependent 7-cyano-7-deazaguanine reductase from Hyphomonas neptunium (strain ATCC 15444).